Here is a 253-residue protein sequence, read N- to C-terminus: Pimeloyl-[acyl-carrier protein] methyl ester esterase (253 aa).

Residues Trp-18, 78 to 79, and 139 to 143 contribute to the substrate site; these read SL and FLALD. The active-site Nucleophile is Ser-78. Active-site residues include Asp-203 and His-231. His-231 contributes to the substrate binding site.

The protein belongs to the AB hydrolase superfamily. Carboxylesterase BioH family. As to quaternary structure, monomer.

It localises to the cytoplasm. It carries out the reaction 6-carboxyhexanoyl-[ACP] methyl ester + H2O = 6-carboxyhexanoyl-[ACP] + methanol + H(+). The protein operates within cofactor biosynthesis; biotin biosynthesis. Its function is as follows. The physiological role of BioH is to remove the methyl group introduced by BioC when the pimeloyl moiety is complete. It allows to synthesize pimeloyl-ACP via the fatty acid synthetic pathway through the hydrolysis of the ester bonds of pimeloyl-ACP esters. This is Pimeloyl-[acyl-carrier protein] methyl ester esterase from Xanthomonas axonopodis pv. citri (strain 306).